The chain runs to 502 residues: Cardiolipin synthase (502 aa).

Helical transmembrane passes span 7-27, 29-49, and 59-79; these read VIIF…YWEG, LLGG…FVIS, and ITWL…YLMF. 2 consecutive PLD phosphodiesterase domains span residues 237-264 and 415-442; these read INFR…GDEY and SKGF…DMRS. Catalysis depends on residues His242, Lys244, Asp249, His420, Lys422, and Asp427.

This sequence belongs to the phospholipase D family. Cardiolipin synthase subfamily.

The protein resides in the cell membrane. The catalysed reaction is 2 a 1,2-diacyl-sn-glycero-3-phospho-(1'-sn-glycerol) = a cardiolipin + glycerol. In terms of biological role, catalyzes the reversible phosphatidyl group transfer from one phosphatidylglycerol molecule to another to form cardiolipin (CL) (diphosphatidylglycerol) and glycerol. The sequence is that of Cardiolipin synthase (cls) from Geobacillus sp. (strain WCH70).